We begin with the raw amino-acid sequence, 300 residues long: B3 domain-containing protein At5g57720 (300 aa).

Positions 11-105 form a DNA-binding region, TF-B3; that stretch reads PDFLKIFNSH…SFWVRIHRNG (95 aa). Residues 115-142 form a disordered region; that stretch reads KIQEISDDEDETNGDGDPHMEEEGDTDE. Positions 119–129 are enriched in acidic residues; sequence ISDDEDETNGD.

The protein localises to the nucleus. In Arabidopsis thaliana (Mouse-ear cress), this protein is B3 domain-containing protein At5g57720.